Consider the following 312-residue polypeptide: 2-dehydropantoate 2-reductase (312 aa).

Residues 7 to 12 (GAGAMG), Asn-105, and Ala-131 each bind NADP(+). Asn-105 contacts substrate. Residue Lys-187 is the Proton donor of the active site. Residues Asn-191, Asn-195, and Ser-260 each contribute to the substrate site. NADP(+) is bound at residue Glu-273.

The protein belongs to the ketopantoate reductase family.

The protein localises to the cytoplasm. It catalyses the reaction (R)-pantoate + NADP(+) = 2-dehydropantoate + NADPH + H(+). The protein operates within cofactor biosynthesis; (R)-pantothenate biosynthesis; (R)-pantoate from 3-methyl-2-oxobutanoate: step 2/2. Its function is as follows. Catalyzes the NADPH-dependent reduction of ketopantoate into pantoic acid. This is 2-dehydropantoate 2-reductase from Lactococcus lactis subsp. lactis (strain IL1403) (Streptococcus lactis).